The following is a 163-amino-acid chain: Peptide methionine sulfoxide reductase MsrA (163 aa).

Residue C10 is part of the active site.

It belongs to the MsrA Met sulfoxide reductase family.

It carries out the reaction L-methionyl-[protein] + [thioredoxin]-disulfide + H2O = L-methionyl-(S)-S-oxide-[protein] + [thioredoxin]-dithiol. It catalyses the reaction [thioredoxin]-disulfide + L-methionine + H2O = L-methionine (S)-S-oxide + [thioredoxin]-dithiol. Its function is as follows. Has an important function as a repair enzyme for proteins that have been inactivated by oxidation. Catalyzes the reversible oxidation-reduction of methionine sulfoxide in proteins to methionine. This Ruthia magnifica subsp. Calyptogena magnifica protein is Peptide methionine sulfoxide reductase MsrA.